We begin with the raw amino-acid sequence, 59 residues long: UPF0391 membrane protein GbCGDNIH1_2123 (59 aa).

2 helical membrane passes run 6–26 (LALF…TGIS) and 35–55 (ILFV…LAAG).

It belongs to the UPF0391 family.

The protein resides in the cell membrane. In Granulibacter bethesdensis (strain ATCC BAA-1260 / CGDNIH1), this protein is UPF0391 membrane protein GbCGDNIH1_2123.